The sequence spans 77 residues: LERQKNQNWYEGWFNSSPWFTTLLSTIAGPLLLLLLLLILGPCIINRLVQFINNRVSAVKILVLRQKYQTLDNEDNL.

Over 1–24 the chain is Extracellular; the sequence is LERQKNQNWYEGWFNSSPWFTTLL. The helical transmembrane segment at 25 to 45 threads the bilayer; that stretch reads STIAGPLLLLLLLLILGPCII. Cysteine 43 is lipidated: S-palmitoyl cysteine; by host. Residues 46-77 are Cytoplasmic-facing; sequence NRLVQFINNRVSAVKILVLRQKYQTLDNEDNL. The short motif at 68-71 is the YXXL motif; contains endocytosis signal element; that stretch reads YQTL.

The mature envelope protein (Env) consists of a trimer of SU-TM heterodimers attached by noncovalent interactions or by a labile interchain disulfide bond. Post-translationally, specific enzymatic cleavages in vivo yield mature proteins. Envelope glycoproteins are synthesized as an inactive precursor that is N-glycosylated and processed likely by host cell furin or by a furin-like protease in the Golgi to yield the mature SU and TM proteins. The cleavage site between SU and TM requires the minimal sequence [KR]-X-[KR]-R. The R-peptide is released from the C-terminus of the cytoplasmic tail of the TM protein upon particle formation as a result of proteolytic cleavage by the viral protease. Cleavage of this peptide is required for TM to become fusogenic. In terms of processing, the transmembrane protein is palmitoylated. The R-peptide is palmitoylated.

It localises to the virion membrane. The protein resides in the host cell membrane. The surface protein (SU) attaches the virus to the host cell by binding to its receptor. This interaction triggers the refolding of the transmembrane protein (TM) and is thought to activate its fusogenic potential by unmasking its fusion peptide. Fusion occurs at the host cell plasma membrane. In terms of biological role, the transmembrane protein (TM) acts as a class I viral fusion protein. Under the current model, the protein has at least 3 conformational states: pre-fusion native state, pre-hairpin intermediate state, and post-fusion hairpin state. During viral and target cell membrane fusion, the coiled coil regions (heptad repeats) assume a trimer-of-hairpins structure, positioning the fusion peptide in close proximity to the C-terminal region of the ectodomain. The formation of this structure appears to drive apposition and subsequent fusion of viral and target cell membranes. Membranes fusion leads to delivery of the nucleocapsid into the cytoplasm. The sequence is that of Envelope glycoprotein (env) from Woolly monkey sarcoma virus (WMSV).